A 1801-amino-acid polypeptide reads, in one-letter code: U3 small nucleolar RNA-associated protein 10 (1801 aa).

The HEAT 1 repeat unit spans residues 582 to 619 (IDFQALVPFVLVALGDVSERIRREAAAVLAALGALYKK). 2 helical membrane-spanning segments follow: residues 945 to 965 (IQSGMSYLLSLALGSLLAIVN) and 1001 to 1021 (ALLLVAGLSVIAPELVLHSVM). HEAT repeat units lie at residues 1045-1082 (QTIDQVVPALIQSLRNQKRDVVSGTSELLLSFTAAFEH), 1252-1289 (LSLIDFLDTIEILLQRPGDELRRKVLRLLEGRLRQNPE), 1296-1334 (NRMLDFLPTLVTIVESSPDILLKHAAVACIDRITEKYGK), and 1757-1794 (ALLPEMLPYISELMEDEDENVEREVRRWVKQIEDVLGE).

It belongs to the HEATR1/UTP10 family. In terms of assembly, component of the ribosomal small subunit (SSU) processome.

The protein localises to the nucleus. It localises to the nucleolus. The protein resides in the membrane. Involved in nucleolar processing of pre-18S ribosomal RNA. Involved in ribosome biosynthesis. The chain is U3 small nucleolar RNA-associated protein 10 from Aspergillus terreus (strain NIH 2624 / FGSC A1156).